Here is a 404-residue protein sequence, read N- to C-terminus: Argininosuccinate synthase (404 aa).

7 to 15 (AYSGGLDTS) serves as a coordination point for ATP. L-citrulline-binding residues include Y85 and S90. Position 115 (G115) interacts with ATP. L-aspartate contacts are provided by T117, N121, and D122. N121 provides a ligand contact to L-citrulline. Residues R125, S178, S187, E264, and Y276 each contribute to the L-citrulline site.

The protein belongs to the argininosuccinate synthase family. Type 1 subfamily. Homotetramer.

The protein localises to the cytoplasm. It catalyses the reaction L-citrulline + L-aspartate + ATP = 2-(N(omega)-L-arginino)succinate + AMP + diphosphate + H(+). It functions in the pathway amino-acid biosynthesis; L-arginine biosynthesis; L-arginine from L-ornithine and carbamoyl phosphate: step 2/3. This Rhodopirellula baltica (strain DSM 10527 / NCIMB 13988 / SH1) protein is Argininosuccinate synthase.